Reading from the N-terminus, the 149-residue chain is MILIVEDDAHKSSQILELVNLVIGSGAEVKLVDNVMDAVRFLFEMTPEKIILDMSLPSHKALPGQGTPVPLPTGGIEVLLELRMKSHMGLPILILTQYPEIEIEDEPVPVAESALTFQEEYGFTDIEACYYDHNDSKPWKQKTMEFLKS.

Residues 1 to 134 (MILIVEDDAH…DIEACYYDHN (134 aa)) enclose the Response regulatory domain. A 4-aspartylphosphate modification is found at D53.

In terms of processing, probably phosphorylated by DtcA.

Its function is as follows. Possible phosphate scavenger member of the two-component regulatory system Detocs that confers resistance to bacteriophage. When the system (DtcA-DtcB-DtcC) is expressed in a susceptible E.coli (strain MG1655) it confers resistance to bacteriophages T2, T4, T5, T6 and SECphi27. Detocs inhibits T5 infection leading to growth arrest but not complete cell lysis, during SECphi27 infection leads to cell lysis. Overexpression of this protein along with the intact Detocs locus cancels T5 immunity; when the phosphate-receiving Asp-53 is mutated to Ala in this protein, immunity is restored. DtcA probably autophosphorylates upon sensing viral infection, and subsequently transfers the phosphate signal to DtcC which activates it, leading to an antiviral defense; DtcB (this subunit) may scavenge phosphorylation signals from accidental activation of DtcA. The sequence is that of Detocs response regulatory protein DtcB from Vibrio alginolyticus.